A 137-amino-acid polypeptide reads, in one-letter code: Small ribosomal subunit protein uS12 (137 aa).

Positions 1-57 (MPTINQLVRKPRRAQVTKSKSPAMNVGYNSRKKVQTKLASPQKRGVATRVGTMTPKK) are disordered. Aspartate 102 carries the post-translational modification 3-methylthioaspartic acid.

It belongs to the universal ribosomal protein uS12 family. As to quaternary structure, part of the 30S ribosomal subunit. Contacts proteins S8 and S17. May interact with IF1 in the 30S initiation complex.

In terms of biological role, with S4 and S5 plays an important role in translational accuracy. Its function is as follows. Interacts with and stabilizes bases of the 16S rRNA that are involved in tRNA selection in the A site and with the mRNA backbone. Located at the interface of the 30S and 50S subunits, it traverses the body of the 30S subunit contacting proteins on the other side and probably holding the rRNA structure together. The combined cluster of proteins S8, S12 and S17 appears to hold together the shoulder and platform of the 30S subunit. This chain is Small ribosomal subunit protein uS12, found in Lactococcus lactis subsp. lactis (strain IL1403) (Streptococcus lactis).